A 189-amino-acid polypeptide reads, in one-letter code: HGPRTase-like protein (189 aa).

This sequence belongs to the purine/pyrimidine phosphoribosyltransferase family. Archaeal HPRT subfamily.

Its function is as follows. May catalyze a purine salvage reaction, the substrate is unknown. This Halorhabdus utahensis (strain DSM 12940 / JCM 11049 / AX-2) protein is HGPRTase-like protein.